We begin with the raw amino-acid sequence, 715 residues long: Polyribonucleotide nucleotidyltransferase (715 aa).

The Mg(2+) site is built by Asp485 and Asp491. The KH domain maps to 552 to 611 (PRIHTMKIDPKKIKDVIGKGGAVIRALTEETGTSIDIDDDGTVKIAATDNNAAKAVMARI). In terms of domain architecture, S1 motif spans 621 to 689 (NAIYKGKVTR…RQNRIRLTMK (69 aa)). The segment at 695 to 715 (TPVAENVTEEAEVSSEQQAEI) is disordered.

This sequence belongs to the polyribonucleotide nucleotidyltransferase family. As to quaternary structure, component of the RNA degradosome, which is a multiprotein complex involved in RNA processing and mRNA degradation. It depends on Mg(2+) as a cofactor.

The protein resides in the cytoplasm. It catalyses the reaction RNA(n+1) + phosphate = RNA(n) + a ribonucleoside 5'-diphosphate. Functionally, involved in mRNA degradation. Catalyzes the phosphorolysis of single-stranded polyribonucleotides processively in the 3'- to 5'-direction. This chain is Polyribonucleotide nucleotidyltransferase, found in Actinobacillus pleuropneumoniae serotype 7 (strain AP76).